The sequence spans 284 residues: TnP I resolvase (284 aa).

The Core-binding (CB) domain maps to 1-84 (MDVAKQFSSY…SLAKFNEFLI (84 aa)). The Tyr recombinase domain maps to 107–282 (ASPTQIVELD…NQLQLKNKME (176 aa)). Active-site residues include R145, K170, H234, R237, and H260. The active-site O-(3'-phospho-DNA)-tyrosine intermediate is the Y269.

Belongs to the 'phage' integrase family.

Resolvase catalyzes the resolution (a site-specific recombination) of the cointegrated replicon to yield the final transposition products. This Bacillus thuringiensis protein is TnP I resolvase (tnpI).